Reading from the N-terminus, the 550-residue chain is Arginine--tRNA ligase (550 aa).

Residues 130-140 carry the 'HIGH' region motif; it reads ANPTGPIHIGG.

It belongs to the class-I aminoacyl-tRNA synthetase family. Monomer.

It is found in the cytoplasm. It carries out the reaction tRNA(Arg) + L-arginine + ATP = L-arginyl-tRNA(Arg) + AMP + diphosphate. The protein is Arginine--tRNA ligase of Mycobacterium ulcerans (strain Agy99).